Reading from the N-terminus, the 514-residue chain is 2,3-bisphosphoglycerate-independent phosphoglycerate mutase (514 aa).

Mn(2+) contacts are provided by D14 and S64. S64 serves as the catalytic Phosphoserine intermediate. Residues H125, 155-156 (RD), R187, R193, 263-266 (RADR), and K336 each bind substrate. Residues D403, H407, D444, H445, and H463 each contribute to the Mn(2+) site.

The protein belongs to the BPG-independent phosphoglycerate mutase family. In terms of assembly, monomer. Mn(2+) is required as a cofactor.

The enzyme catalyses (2R)-2-phosphoglycerate = (2R)-3-phosphoglycerate. It participates in carbohydrate degradation; glycolysis; pyruvate from D-glyceraldehyde 3-phosphate: step 3/5. Catalyzes the interconversion of 2-phosphoglycerate and 3-phosphoglycerate. The chain is 2,3-bisphosphoglycerate-independent phosphoglycerate mutase from Salmonella paratyphi A (strain ATCC 9150 / SARB42).